We begin with the raw amino-acid sequence, 273 residues long: Suppressor protein STM1 (273 aa).

The segment at 1-153 (MSNPFDLLGN…PKTAQLSLQD (153 aa)) is disordered. Ser-2 is modified (N-acetylserine). A phosphoserine; by MTOR mark is found at Ser-32, Ser-41, and Ser-45. A Glycyl lysine isopeptide (Lys-Gly) (interchain with G-Cter in ubiquitin) cross-link involves residue Lys-46. Ser-55 and Ser-73 each carry phosphoserine; by MTOR. Ser-55 is subject to Phosphoserine. Composition is skewed to basic and acidic residues over residues 60-77 (AIRD…KDVT), 89-104 (RATD…DTKK), and 111-124 (GDDK…KEAQ). Position 118 is a phosphoserine (Ser-118). Residues Lys-121 and Lys-171 each participate in a glycyl lysine isopeptide (Lys-Gly) (interchain with G-Cter in ubiquitin) cross-link. Residue Thr-181 is modified to Phosphothreonine; by MTOR. Lys-184 participates in a covalent cross-link: Glycyl lysine isopeptide (Lys-Gly) (interchain with G-Cter in ubiquitin). Position 218 is a phosphothreonine; by MTOR (Thr-218). Residues 219 to 273 (RKNFGDRNNNSRNNFNNRRGGRGARKGNNTANATNSANTVQKNRNIDVSNLPSLA) form a disordered region. 2 stretches are compositionally biased toward low complexity: residues 224–236 (DRNN…FNNR) and 244–257 (KGNN…SANT). The residue at position 229 (Ser-229) is a Phosphoserine. The segment covering 258 to 273 (VQKNRNIDVSNLPSLA) has biased composition (polar residues).

It belongs to the SERBP1-HABP4 family. As to quaternary structure, associates with mature 80S ribosomes. Binds to the head domain of the 40S ribosomal subunit and prevents mRNA binding by inserting its alpha-helix domain towards the mRNA entry tunnel at the decoding site, where it blocks the binding of tRNA and mRNA at the A- and P-sites. Interacts with EFT1; interaction sequesters EFT1 at the A-site of the ribosome, thereby blocking the interaction sites of the mRNA-tRNA complex, promoting ribosome stabilization and hibernation. Interacts with CDC13. Associates with the telomere-proximal Y' element. Post-translationally, phosphorylation by TORC1 upon nutrient replenishment inhibits STM1 and causes its release from dormant ribosomes.

Its subcellular location is the cytoplasm. It localises to the nucleus. The protein localises to the perinuclear region. Ribosome preservation factor that protect a small pool of nontranslating, vacant ribosomes in cells under nutrient starvation conditions. Under nutrient-limiting conditions, cells reduce ribosome biogenesis and degrade ribosomes via autophagy (ribophagy) or proteasomal degradation. To avoid excessive degradation during starvation, STM1 binds to and protects 80S ribosomes from proteasomal degradation. Under nutrient-sufficient conditions, TORC1 phosphorylates and inhibits STM1 to prevent formation of dormant 80S ribosomes. Acts as an inhibitor of mRNA translation by promoting ribosome hibernation: clamps the two ribosomal subunits, thereby preventing their dissociation, and inhibits translation by excluding mRNA-binding. Acts via its association with eEF2 (EFT1), promoting ribosome stabilization and storage in an inactive state. May also repress translation by preventing association of eEF3 (YEF3 and HEF3) with ribosomes. Binds specifically G4 quadruplex (these are four-stranded right-handed helices, stabilized by guanine base quartets) and purine motif triplex (characterized by a third, antiparallel purine-rich DNA strand located within the major groove of a homopurine stretch of duplex DNA) nucleic acid structures. These structures may be present at telomeres or in rRNAs. Acts with CDC13 to control telomere length homeostasis. Involved in the control of the apoptosis-like cell death. The polypeptide is Suppressor protein STM1 (Saccharomyces cerevisiae (strain ATCC 204508 / S288c) (Baker's yeast)).